The following is a 253-amino-acid chain: 5'/3'-nucleotidase SurE (253 aa).

Residues D8, D9, S39, and N92 each coordinate a divalent metal cation.

It belongs to the SurE nucleotidase family. It depends on a divalent metal cation as a cofactor.

It localises to the cytoplasm. The enzyme catalyses a ribonucleoside 5'-phosphate + H2O = a ribonucleoside + phosphate. The catalysed reaction is a ribonucleoside 3'-phosphate + H2O = a ribonucleoside + phosphate. It catalyses the reaction [phosphate](n) + H2O = [phosphate](n-1) + phosphate + H(+). In terms of biological role, nucleotidase with a broad substrate specificity as it can dephosphorylate various ribo- and deoxyribonucleoside 5'-monophosphates and ribonucleoside 3'-monophosphates with highest affinity to 3'-AMP. Also hydrolyzes polyphosphate (exopolyphosphatase activity) with the preference for short-chain-length substrates (P20-25). Might be involved in the regulation of dNTP and NTP pools, and in the turnover of 3'-mononucleotides produced by numerous intracellular RNases (T1, T2, and F) during the degradation of various RNAs. The protein is 5'/3'-nucleotidase SurE of Escherichia fergusonii (strain ATCC 35469 / DSM 13698 / CCUG 18766 / IAM 14443 / JCM 21226 / LMG 7866 / NBRC 102419 / NCTC 12128 / CDC 0568-73).